Here is a 156-residue protein sequence, read N- to C-terminus: MSRKNRAPKREVLPDPLYNSKLVTRLINRIMLDGKRGTAASIVYGAFEQIKEATGNDALEVFEQAMENIMPVLEVRARRVGGSNYQVPVEVRPERRTTLGLRWLVTASRTRGEHTMKDRLAKEILDASNNTGASVKKREDTHRMAEANRAFAHFRW.

This sequence belongs to the universal ribosomal protein uS7 family. In terms of assembly, part of the 30S ribosomal subunit. Contacts proteins S9 and S11.

In terms of biological role, one of the primary rRNA binding proteins, it binds directly to 16S rRNA where it nucleates assembly of the head domain of the 30S subunit. Is located at the subunit interface close to the decoding center, probably blocks exit of the E-site tRNA. This is Small ribosomal subunit protein uS7 from Streptococcus mutans serotype c (strain ATCC 700610 / UA159).